Here is a 260-residue protein sequence, read N- to C-terminus: Enoyl-[acyl-carrier-protein] reductase [NADH] FabI (260 aa).

NAD(+)-binding positions include Gly15, 21–22 (SI), Gln42, 66–67 (DV), and Met94. Ala97 serves as a coordination point for substrate. Catalysis depends on proton acceptor residues Tyr147 and Tyr157. Residues Lys164 and 193–197 (IKTLA) contribute to the NAD(+) site.

This sequence belongs to the short-chain dehydrogenases/reductases (SDR) family. FabI subfamily. Homotetramer.

The catalysed reaction is a 2,3-saturated acyl-[ACP] + NAD(+) = a (2E)-enoyl-[ACP] + NADH + H(+). The protein operates within lipid metabolism; fatty acid biosynthesis. Catalyzes the reduction of a carbon-carbon double bond in an enoyl moiety that is covalently linked to an acyl carrier protein (ACP). Involved in the elongation cycle of fatty acid which are used in the lipid metabolism. The sequence is that of Enoyl-[acyl-carrier-protein] reductase [NADH] FabI (fabI) from Rickettsia felis (strain ATCC VR-1525 / URRWXCal2) (Rickettsia azadi).